We begin with the raw amino-acid sequence, 886 residues long: DNA gyrase subunit A (886 aa).

One can recognise a Topo IIA-type catalytic domain in the interval 35–501; it reads LPDVRDGLKP…GFEDLEDEDL (467 aa). The active-site O-(5'-phospho-DNA)-tyrosine intermediate is Y123. The GyrA-box signature appears at 528–534; it reads QNRGGRG. A disordered region spans residues 810–860; that stretch reads VKEDADEENEDEQSTVSEDGTEQQREAVVNDETPGNAIHTEVIDSEVNDED. Acidic residues predominate over residues 813–822; sequence DADEENEDEQ.

It belongs to the type II topoisomerase GyrA/ParC subunit family. Heterotetramer, composed of two GyrA and two GyrB chains. In the heterotetramer, GyrA contains the active site tyrosine that forms a transient covalent intermediate with DNA, while GyrB binds cofactors and catalyzes ATP hydrolysis.

The protein resides in the cytoplasm. The catalysed reaction is ATP-dependent breakage, passage and rejoining of double-stranded DNA.. In terms of biological role, a type II topoisomerase that negatively supercoils closed circular double-stranded (ds) DNA in an ATP-dependent manner to modulate DNA topology and maintain chromosomes in an underwound state. Negative supercoiling favors strand separation, and DNA replication, transcription, recombination and repair, all of which involve strand separation. Also able to catalyze the interconversion of other topological isomers of dsDNA rings, including catenanes and knotted rings. Type II topoisomerases break and join 2 DNA strands simultaneously in an ATP-dependent manner. The polypeptide is DNA gyrase subunit A (Staphylococcus aureus (strain MRSA252)).